Consider the following 24-residue polypeptide: Brevinin-1R (24 aa).

The cysteines at positions 18 and 24 are disulfide-linked.

In terms of tissue distribution, expressed by the skin glands.

Its subcellular location is the secreted. Functionally, antimicrobial peptide. The protein is Brevinin-1R of Pelophylax ridibundus (Marsh frog).